The chain runs to 359 residues: NADH-quinone oxidoreductase subunit H (359 aa).

8 helical membrane passes run 19 to 39 (IGWFPLGLVIIAAIPLVFIAL), 94 to 114 (FLFVIGPGILFVGSFLAFAVL), 127 to 147 (VGLFYAVGIVAIEVVGILAAG), 166 to 186 (IVSYEIPASIALLCAAMLAGT), 202 to 222 (FMHWFLFTNPIAWLPFLIYFI), 266 to 286 (MFMVSAIISIAFLGGWTSPLP), 301 to 321 (VWGAFWIIMKGFFFIFVQMWL), and 337 to 357 (CWKVLTPFSLIAFVLTAIWVI).

It belongs to the complex I subunit 1 family. As to quaternary structure, NDH-1 is composed of 14 different subunits. Subunits NuoA, H, J, K, L, M, N constitute the membrane sector of the complex.

It localises to the cell inner membrane. It catalyses the reaction a quinone + NADH + 5 H(+)(in) = a quinol + NAD(+) + 4 H(+)(out). Functionally, NDH-1 shuttles electrons from NADH, via FMN and iron-sulfur (Fe-S) centers, to quinones in the respiratory chain. The immediate electron acceptor for the enzyme in this species is believed to be ubiquinone. Couples the redox reaction to proton translocation (for every two electrons transferred, four hydrogen ions are translocated across the cytoplasmic membrane), and thus conserves the redox energy in a proton gradient. This subunit may bind ubiquinone. The sequence is that of NADH-quinone oxidoreductase subunit H from Chlorobaculum parvum (strain DSM 263 / NCIMB 8327) (Chlorobium vibrioforme subsp. thiosulfatophilum).